We begin with the raw amino-acid sequence, 501 residues long: Lycopene beta cyclase, chloroplastic (501 aa).

The transit peptide at 1 to 48 (MDTLLKTPNKLDFFIPQFHGFERLCSNNPYHSRVRLGVKKRAIKIVSS) directs the protein to the chloroplast. V49 carries the post-translational modification N-acetylvaline. NAD(+) is bound at residue 85–113 (LAIVGGGPAGLAVAQQVSEAGLSVCSIDP).

Belongs to the lycopene cyclase family.

It localises to the plastid. The protein localises to the chloroplast. The enzyme catalyses a carotenoid psi-end group = a carotenoid beta-end derivative. Its pathway is carotenoid biosynthesis; beta-carotene biosynthesis. It participates in carotenoid biosynthesis; beta-zeacarotene biosynthesis. Its function is as follows. Involved in carotenoid biosynthesis. Catalyzes the double cyclization reaction which converts lycopene to beta-carotene and neurosporene to beta-zeacarotene. Major lycopene beta-cyclase that does not seem to be involved in neoxanthin synthesis. Involved in salt tolerance improvement by increasing synthesis of carotenoids, which impairs reactive oxygen species (ROS) and protects the photosynthetic system under salt stress. This Arabidopsis thaliana (Mouse-ear cress) protein is Lycopene beta cyclase, chloroplastic.